The primary structure comprises 363 residues: Protein arginine N-methyltransferase 2 (363 aa).

ANK repeat units follow at residues alanine 22–aspartate 46 and leucine 48–lysine 80. One can recognise an RMT2 domain in the interval lysine 111 to isoleucine 363. Residues phenylalanine 120, phenylalanine 186–valine 191, glutamate 209–histidine 211, tryptophan 236–glutamine 237, and aspartate 265 contribute to the S-adenosyl-L-methionine site.

Belongs to the class I-like SAM-binding methyltransferase superfamily. RMT2 methyltransferase family. As to quaternary structure, monomer.

The protein resides in the cytoplasm. The protein localises to the nucleus. Its function is as follows. S-adenosyl-L-methionine-dependent protein-arginine N-methyltransferase that methylates the delta-nitrogen atom of arginine residues to form N5-methylarginine (type IV) in target proteins. Monomethylates ribosomal protein L12. The sequence is that of Protein arginine N-methyltransferase 2 from Cryptococcus neoformans var. neoformans serotype D (strain B-3501A) (Filobasidiella neoformans).